A 71-amino-acid chain; its full sequence is Translation initiation factor IF-1 (71 aa).

One can recognise an S1-like domain in the interval 1–71 (MANDVIEIEG…TKGRITYRFR (71 aa)).

This sequence belongs to the IF-1 family. Component of the 30S ribosomal translation pre-initiation complex which assembles on the 30S ribosome in the order IF-2 and IF-3, IF-1 and N-formylmethionyl-tRNA(fMet); mRNA recruitment can occur at any time during PIC assembly.

The protein localises to the cytoplasm. In terms of biological role, one of the essential components for the initiation of protein synthesis. Stabilizes the binding of IF-2 and IF-3 on the 30S subunit to which N-formylmethionyl-tRNA(fMet) subsequently binds. Helps modulate mRNA selection, yielding the 30S pre-initiation complex (PIC). Upon addition of the 50S ribosomal subunit IF-1, IF-2 and IF-3 are released leaving the mature 70S translation initiation complex. This Leuconostoc mesenteroides subsp. mesenteroides (strain ATCC 8293 / DSM 20343 / BCRC 11652 / CCM 1803 / JCM 6124 / NCDO 523 / NBRC 100496 / NCIMB 8023 / NCTC 12954 / NRRL B-1118 / 37Y) protein is Translation initiation factor IF-1.